A 948-amino-acid polypeptide reads, in one-letter code: UvrABC system protein A (948 aa).

ATP is bound at residue 31-38 (GLSGSGKS). A C4-type zinc finger spans residues 249–277 (CPNGHDIGFTELSPRMFSFNSPYGACETC). ABC transporter domains are found at residues 307–586 (WAGS…KNSL) and 606–934 (GNGS…QYLK). ATP is bound at residue 638–645 (GVSGSGKS). Residues 737-763 (CETCEGDGILKIEMHFLPDVYVTCEVC) form a C4-type zinc finger.

The protein belongs to the ABC transporter superfamily. UvrA family. In terms of assembly, forms a heterotetramer with UvrB during the search for lesions.

The protein resides in the cytoplasm. In terms of biological role, the UvrABC repair system catalyzes the recognition and processing of DNA lesions. UvrA is an ATPase and a DNA-binding protein. A damage recognition complex composed of 2 UvrA and 2 UvrB subunits scans DNA for abnormalities. When the presence of a lesion has been verified by UvrB, the UvrA molecules dissociate. The polypeptide is UvrABC system protein A (Leptospira interrogans serogroup Icterohaemorrhagiae serovar copenhageni (strain Fiocruz L1-130)).